The primary structure comprises 161 residues: Protein shisa-like-2B (161 aa).

A helical transmembrane segment spans residues 65 to 85; that stretch reads IGALIGLGIAALVLLAFVISV. The tract at residues 115-134 is disordered; sequence QEGNSNRKSKAPRSNAASNS.

The protein belongs to the shisa family.

It localises to the membrane. The protein is Protein shisa-like-2B (SHISAL2B) of Bos taurus (Bovine).